A 178-amino-acid polypeptide reads, in one-letter code: Ribosomal RNA small subunit methyltransferase G (178 aa).

S-adenosyl-L-methionine is bound by residues Gly-54, Leu-59, 105-106, and Arg-120; that span reads LE.

Belongs to the methyltransferase superfamily. RNA methyltransferase RsmG family.

The protein localises to the cytoplasm. It carries out the reaction guanosine(527) in 16S rRNA + S-adenosyl-L-methionine = N(7)-methylguanosine(527) in 16S rRNA + S-adenosyl-L-homocysteine. In terms of biological role, specifically methylates the N7 position of guanine in position 527 of 16S rRNA. The protein is Ribosomal RNA small subunit methyltransferase G of Helicobacter acinonychis (strain Sheeba).